Here is a 365-residue protein sequence, read N- to C-terminus: 2-aminoethylphosphonate--pyruvate transaminase (365 aa).

At Lys-194 the chain carries N6-(pyridoxal phosphate)lysine.

This sequence belongs to the class-V pyridoxal-phosphate-dependent aminotransferase family. PhnW subfamily. As to quaternary structure, homodimer. The cofactor is pyridoxal 5'-phosphate.

It carries out the reaction (2-aminoethyl)phosphonate + pyruvate = phosphonoacetaldehyde + L-alanine. Its function is as follows. Involved in phosphonate degradation. This chain is 2-aminoethylphosphonate--pyruvate transaminase, found in Bacillus mycoides (strain KBAB4) (Bacillus weihenstephanensis).